Here is a 277-residue protein sequence, read N- to C-terminus: Large ribosomal subunit protein uL2 (277 aa).

The disordered stretch occupies residues 222-277; that stretch reads GVTMNPVDHPHGGGEGRTSGGRNPVTPWGFPTKGKKTRNNKATDKFIVSSRHKRKK.

This sequence belongs to the universal ribosomal protein uL2 family. In terms of assembly, part of the 50S ribosomal subunit. Forms a bridge to the 30S subunit in the 70S ribosome.

Functionally, one of the primary rRNA binding proteins. Required for association of the 30S and 50S subunits to form the 70S ribosome, for tRNA binding and peptide bond formation. It has been suggested to have peptidyltransferase activity; this is somewhat controversial. Makes several contacts with the 16S rRNA in the 70S ribosome. This is Large ribosomal subunit protein uL2 from Xanthobacter autotrophicus (strain ATCC BAA-1158 / Py2).